We begin with the raw amino-acid sequence, 556 residues long: Beta-hexosaminidase subunit beta (556 aa).

Positions 1-42 are cleaved as a signal peptide; it reads MELCGLGLPRPPMLLALLLATLLAAMLALLTQVALVVQVAEA. Residues 43–121 constitute a propeptide that is removed on maturation; it reads ARAPSVSAKP…HHEPAEFQAK (79 aa). Residue asparagine 84 is glycosylated (N-linked (GlcNAc...) asparagine). Residues cysteine 91 and cysteine 137 are joined by a disulfide bond. Residues asparagine 142, asparagine 190, and asparagine 327 are each glycosylated (N-linked (GlcNAc...) asparagine). 2 cysteine pairs are disulfide-bonded: cysteine 309/cysteine 360 and cysteine 534/cysteine 551. The active-site Proton donor is the glutamate 355.

It belongs to the glycosyl hydrolase 20 family. In terms of assembly, there are 3 forms of beta-hexosaminidase: hexosaminidase A is a heterodimer composed of one subunit alpha and one subunit beta (chain A and B); hexosaminidase B is a homodimer of two beta subunits (two chains A and B); hexosaminidase S is a homodimer of two alpha subunits. The composition of the dimer (isozyme A versus isozyme S) has a significant effect on the substrate specificity of the alpha subunit active site. N-linked glycans at Asn-142 and Asn-190 consist of Man(3)-GlcNAc(2) and Man(5 to 7)-GlcNAc(2), respectively. Post-translationally, the beta-A and beta-B chains are produced by proteolytic processing of the precursor beta chain.

The protein localises to the lysosome. It is found in the cytoplasmic vesicle. Its subcellular location is the secretory vesicle. It localises to the cortical granule. It carries out the reaction Hydrolysis of terminal non-reducing N-acetyl-D-hexosamine residues in N-acetyl-beta-D-hexosaminides.. The enzyme catalyses N-acetyl-beta-D-galactosaminyl-(1-&gt;4)-beta-D-3-sulfogalactosyl-(1-&gt;4)-beta-D-glucosyl-(1&lt;-&gt;1')-ceramide + H2O = a beta-D-3-sulfogalactosyl-(1-&gt;4)-beta-D-glucosyl-(1&lt;-&gt;1')-ceramide + N-acetyl-beta-D-galactosamine. The catalysed reaction is a ganglioside GM2 (d18:1(4E)) + H2O = a ganglioside GM3 (d18:1(4E)) + N-acetyl-beta-D-galactosamine. It catalyses the reaction a ganglioside GM2 + H2O = a ganglioside GM3 + N-acetyl-beta-D-galactosamine. It carries out the reaction beta-D-GalNAc-(1-&gt;4)-alpha-L-IdoA-(1-&gt;3)-beta-D-GalNAc-4-sulfate-(1-&gt;4)-alpha-L-IdoA-(1-&gt;3)-D-GalNAc-4-sulfate + H2O = alpha-L-IdoA-(1-&gt;3)-beta-D-GalNAc-4-sulfate-(1-&gt;4)-alpha-L-IdoA-(1-&gt;3)-D-GalNAc-4-sulfate + N-acetyl-D-galactosamine. The enzyme catalyses N-acetyl-beta-D-6-sulfogalactosaminyl-(1-&gt;4)-alpha-L-iduronyl-(1-&gt;3)-N-acetyl-D-6-sulfogalactosamine + H2O = alpha-L-iduronyl-(1-&gt;3)-N-acetyl-D-6-sulfogalactosamine + N-acetyl-D-6-sulfogalactosamine. Addition of GM2A stimulates the hydrolysis of sulfated glycosphingolipid SM2 and the ganglioside GM2. In terms of biological role, hydrolyzes the non-reducing end N-acetyl-D-hexosamine and/or sulfated N-acetyl-D-hexosamine of glycoconjugates, such as the oligosaccharide moieties from proteins and neutral glycolipids, or from certain mucopolysaccharides. The isozyme B does not hydrolyze each of these substrates, however hydrolyzes efficiently neutral oligosaccharide. Only the isozyme A is responsible for the degradation of GM2 gangliosides in the presence of GM2A. During fertilization is responsible, at least in part, for the zona block to polyspermy. Present in the cortical granules of non-activated oocytes, is exocytosed during the cortical reaction in response to oocyte activation and inactivates the sperm galactosyltransferase-binding site, accounting for the block in sperm binding to the zona pellucida. In Homo sapiens (Human), this protein is Beta-hexosaminidase subunit beta.